The following is a 463-amino-acid chain: Calcitonin gene-related peptide type 1 receptor (463 aa).

The signal sequence occupies residues 1–22 (MDKKHILCFLVLLPLNMALISA). Residues 23-138 (ESEEGVNQTD…STHEKVKTAL (116 aa)) lie on the Extracellular side of the membrane. N-linked (GlcNAc...) asparagine glycosylation is found at asparagine 29, asparagine 65, asparagine 117, asparagine 122, asparagine 127, and asparagine 128. 3 cysteine pairs are disulfide-bonded: cysteine 47–cysteine 73, cysteine 64–cysteine 104, and cysteine 87–cysteine 126. The chain crosses the membrane as a helical span at residues 139 to 163 (NLFYLTIIGHGLSIASLIISLIIFF). Residues 164–174 (YFKSLSCQRIT) lie on the Cytoplasmic side of the membrane. A helical membrane pass occupies residues 175–197 (LHKNLFFSFICNSIVTIIHLTAV). The Extracellular segment spans residues 198–208 (ANNQALVATNP). The helical transmembrane segment at 209 to 237 (VSCKVSQFIHLYLMGCNYFWMLCEGVYLH) threads the bilayer. Over 238-251 (TLIVVAVFAEKQHL) the chain is Cytoplasmic. Residues 252–272 (MWYYFLGWGFPLLPACIHAIA) traverse the membrane as a helical segment. The Extracellular segment spans residues 273–288 (RSLYYNDNCWISSDTH). Residues 287 to 288 (TH) are required for RAMP3 interaction. The chain crosses the membrane as a helical span at residues 289-313 (LLYIIHGPICAALLVNLFFLLNIVR). Over 314 to 328 (VLITKLKVTHQVESN) the chain is Cytoplasmic. The helical transmembrane segment at 329-350 (LYMKAVRATLILVPLLGIEFVL) threads the bilayer. Residues 351–365 (FPWRPEGKVAEEVYD) are Extracellular-facing. A helical membrane pass occupies residues 366 to 386 (YVMHILMHFQGLLVATIFCFF). Over 387-463 (NGEVQAILRR…KSENMYDLVM (77 aa)) the chain is Cytoplasmic. Phosphoserine occurs at positions 419 and 444.

Belongs to the G-protein coupled receptor 2 family. As to quaternary structure, heterodimer of CALCRL and RAMP1; the receptor complex functions as CGRP receptor. Heterodimer of CALCRL and RAMP2 or CALCRL and RAMP3; the complexes function as adrenomedullin receptor. Expressed predominantly in the lung, thymus, heart and brain.

It localises to the cell membrane. In terms of biological role, g protein-coupled receptor which specificity is determined by its interaction with receptor-activity-modifying proteins (RAMPs). Together with RAMP1, form the receptor complex for calcitonin-gene-related peptides CALCA/CGRP1 and CALCB/CGRP2. Together with RAMP2 or RAMP3, function as receptor complexes for adrenomedullin (ADM and ADM2). Ligand binding causes a conformation change that triggers signaling via guanine nucleotide-binding proteins (G proteins) and modulates the activity of downstream effectors. Activates cAMP-dependent pathway. This chain is Calcitonin gene-related peptide type 1 receptor, found in Mus musculus (Mouse).